Consider the following 310-residue polypeptide: Olfactory receptor 5P56 (310 aa).

Residues 1-25 (MEAQNHTTVKEFILLGLTENSTLRV) are Extracellular-facing. N-linked (GlcNAc...) asparagine glycans are attached at residues Asn-5 and Asn-20. The helical transmembrane segment at 26 to 46 (ILFMIFLGIYTVTLVGNFSII) threads the bilayer. At 47-54 (SLIRSCPQ) the chain is on the cytoplasmic side. A helical transmembrane segment spans residues 55 to 75 (LHTPMYLFLSHLALVDIGFST). At 76–99 (SITPIMLTGFLGHTVTLSVAACVA) the chain is on the extracellular side. A disulfide bridge links Cys-97 with Cys-189. The helical transmembrane segment at 100–120 (QFCIAVTFGTVECFLLAVMAY) threads the bilayer. Residues 121-133 (DRYVAICSPLLYS) are Cytoplasmic-facing. Residues 134-154 (THMSPRICFLLVGASYVGGCV) form a helical membrane-spanning segment. The Extracellular segment spans residues 155-196 (NSGTFTSCLLILSFCGPNQIDHFFCDFPAVLKLSCSDVSIIG). The chain crosses the membrane as a helical span at residues 197-217 (IIPSISAGSIIVITVFVIAVS). Over 218-237 (YTYILITILNMRSTEGRHKA) the chain is Cytoplasmic. Residues 238–258 (FSTCTSHLTAVTLYYGTITFI) form a helical membrane-spanning segment. Topologically, residues 259–271 (YVMPKSNYSTAQN) are extracellular. Asn-265 is a glycosylation site (N-linked (GlcNAc...) asparagine). Residues 272-292 (KILSVFYTVVIPMLNPLIYSL) form a helical membrane-spanning segment. The Cytoplasmic portion of the chain corresponds to 293 to 310 (RNRDVKEALRKAIIRIFP).

It belongs to the G-protein coupled receptor 1 family.

It is found in the cell membrane. Functionally, potential odorant receptor. The polypeptide is Olfactory receptor 5P56 (Mus musculus (Mouse)).